Here is a 282-residue protein sequence, read N- to C-terminus: Non-selective voltage-gated ion channel VDAC2 (282 aa).

The residue at position 1 (Ala1) is an N-acetylalanine. 19 beta stranded membrane passes run 25 to 34, 38 to 46, 53 to 63, 68 to 75, 79 to 88, 94 to 103, 110 to 119, 122 to 129, 136 to 144, 149 to 157, 162 to 174, 177 to 184, 188 to 197, 201 to 210, 217 to 226, 230 to 237, 241 to 250, 253 to 262, and 272 to 281; these read LVKLDVKTKS, VEFTTSGTS, VNGSLETKYKW, LTFTEKWN, TLGTEIAIED, LKLTFDTTFS, SGKVKAAYKQ, VNLGCDVD, AIHGSAVVG, LAGYQMTFD, KLTK…GYKT, FQLHTNVN, EFAGSIYQKV, METAVNLAWT, RFGIAAKYQL, AAISAKVN, LVGVGYTQTL, GVKLTLSALV, and HKLGLGLELE. NAD(+) is bound by residues 241–243 and 259–263; these read LVG and SALVD.

It belongs to the eukaryotic mitochondrial porin family. Monomer, homodimer and higher order oligomers; formation of higher order structures is necessary for scramblase activity. Expressed in skeletal muscle and oocytes.

The protein localises to the mitochondrion outer membrane. The protein resides in the membrane. The catalysed reaction is chloride(in) = chloride(out). It catalyses the reaction K(+)(in) = K(+)(out). The enzyme catalyses a 1,2-diacyl-sn-glycero-3-phospho-L-serine(in) = a 1,2-diacyl-sn-glycero-3-phospho-L-serine(out). It carries out the reaction a 1,2-diacyl-sn-glycero-3-phosphocholine(in) = a 1,2-diacyl-sn-glycero-3-phosphocholine(out). The catalysed reaction is a 1,2-diacyl-sn-glycero-3-phospho-(1D-myo-inositol)(in) = a 1,2-diacyl-sn-glycero-3-phospho-(1D-myo-inositol)(out). Non-selective voltage-gated ion channel that mediates the transport of anions and cations through the mitochondrion outer membrane and plasma membrane. The channel adopts an open conformation at zero mV and a closed conformation at both positive and negative potentials. There are two populations of channels; the main that functions in a lower open-state conductance with lower ion selectivity, that switch, in a voltage-dependent manner, from the open to a low-conducting 'closed' state and the other that has a normal ion selectivity in the typical high conductance, 'open' state. Functionally, catalyzes the scrambling of phospholipids across the outer mitochondrial membrane; the mechanism is unrelated to channel activity and is capable of translocating both anionic and zwitterionic phospholipids. This Xenopus laevis (African clawed frog) protein is Non-selective voltage-gated ion channel VDAC2.